Consider the following 103-residue polypeptide: Transcription factor S (103 aa).

Residues cysteine 4, cysteine 7, cysteine 20, cysteine 23, cysteine 64, cysteine 67, cysteine 92, and cysteine 95 each contribute to the Zn(2+) site. Residues 4–23 form a C4-type zinc finger; it reads CPKCKSLMIYQGDKLVCRKC. The TFIIS-type zinc finger occupies 60–100; sequence TKAICPACGHNEAFWWLRQLRAADESEVRFFRCTKCGKTWR.

The protein belongs to the archaeal RpoM/eukaryotic RPA12/RPB9/RPC11 RNA polymerase family.

Induces RNA cleavage activity in the RNA polymerase. In its presence, the cleavage activity of the RNA polymerase truncates the RNA back to position +15 in a stepwise manner by releasing mainly dinucleotides from the 3'-end of the nascent RNA. The truncated RNAs are able to continue elongation. Involved in transcriptional proofreading and fidelity. Misincorporation of nucleotides during elongation of transcription leads to arrested elongation complexes which are rescued by TFS-promoted removal of a dinucleotide from the 3'-end. TFS is able to induce a cleavage resynthesis cycle in stalled elongation complexes (resulting from the next missing nucleotide or a reduced incorporation rate of a wrong nucleotide) preventing misincorporation and enabling proofreading in a post-incorporation manner. Pausing of elongation complexes is the main determinant of TFS-induced RNA cleavage. In Archaeoglobus fulgidus (strain ATCC 49558 / DSM 4304 / JCM 9628 / NBRC 100126 / VC-16), this protein is Transcription factor S.